A 1643-amino-acid polypeptide reads, in one-letter code: RNA replication protein (1643 aa).

The region spanning 59–224 is the Alphavirus-like MT domain; the sequence is NPYANQTHTH…FHPYTTLEWL (166 aa). The disordered stretch occupies residues 686–711; it reads RPTASRKSCQPTPSVDKSGADSPPEK. Over residues 690 to 700 the composition is skewed to polar residues; it reads SRKSCQPTPSV. The (+)RNA virus helicase ATP-binding domain occupies 828-996; the sequence is SDIKNNRTGK…IFSPYCEFYL (169 aa). 868–875 serves as a coordination point for ATP; that stretch reads GCGGSGKS. Residues 997–1132 form the (+)RNA virus helicase C-terminal domain; the sequence is NATHRNVKDL…TYRDEKTEVY (136 aa). Residues 1131-1155 are disordered; the sequence is VYNSQPASAEPTEPEAPATHFPTAP. Low complexity predominate over residues 1136-1155; the sequence is PASAEPTEPEAPATHFPTAP. The RdRp catalytic domain occupies 1372-1479; that stretch reads RPAHTNDFTA…DRVSIEKDSF (108 aa). A disordered region spans residues 1587 to 1620; the sequence is GSASPPHVFEKTADANTAGSSKTHKRNALKKKKQ. Positions 1608 to 1620 are enriched in basic residues; it reads KTHKRNALKKKKQ.

This sequence belongs to the potexvirus/carlavirus RNA replication protein family.

The enzyme catalyses RNA(n) + a ribonucleoside 5'-triphosphate = RNA(n+1) + diphosphate. The catalysed reaction is ATP + H2O = ADP + phosphate + H(+). Functionally, RNA replication. The central part of this protein possibly functions as an ATP-binding helicase. The polypeptide is RNA replication protein (Narcissus pseudonarcissus (Daffodil)).